A 436-amino-acid chain; its full sequence is Glutamyl-tRNA reductase (436 aa).

Substrate is bound by residues 52–55, S105, 110–112, and Q116; these read TCHR and EDQ. C53 serves as the catalytic Nucleophile. 184 to 189 provides a ligand contact to NADP(+); it reads GAGEMG.

The protein belongs to the glutamyl-tRNA reductase family. In terms of assembly, homodimer.

It catalyses the reaction (S)-4-amino-5-oxopentanoate + tRNA(Glu) + NADP(+) = L-glutamyl-tRNA(Glu) + NADPH + H(+). It participates in porphyrin-containing compound metabolism; protoporphyrin-IX biosynthesis; 5-aminolevulinate from L-glutamyl-tRNA(Glu): step 1/2. Catalyzes the NADPH-dependent reduction of glutamyl-tRNA(Glu) to glutamate 1-semialdehyde (GSA). The protein is Glutamyl-tRNA reductase of Halobacterium salinarum (strain ATCC 29341 / DSM 671 / R1).